The following is a 63-amino-acid chain: UPF0434 protein Mmar10_2939 (63 aa).

Belongs to the UPF0434 family.

This Maricaulis maris (strain MCS10) (Caulobacter maris) protein is UPF0434 protein Mmar10_2939.